An 873-amino-acid chain; its full sequence is MVDQRPRAGSRSFTAPSLIGTNGHFASVGDAAHDPKAYEHGVQVIDEEKEFNPNLSKYLSLEDVTNAGFNYHLISVFGSQSTGKSTLLNHLFGTQFSVMSDKERRQTTKGIWMSKNKTKHEDPNARMADNILVMDVEGTDGRERGEDQDFERKSALFALATSEVLIVNIWEHQVGLYQGANMGLLKTVFEVNLQLFLKDKNTTHRSLLFFVIRDFMGNTPLKNLETTLLEDLSRIWASLSKPQGLERSTIHDYFDFAFYGLPHKGYKPDEFAAEAKKLGSRFREGRRDRKEQLMGASIENGVFLPEYHRRIPADGFAHYANGIWDQIVNNKDLDLPTQQELLAQFRCDEISREVIAAFDEAIAPFEEKQAAGVRAGELVILGGLGAAMRGARVKAVKNFETEASRYHKGVYQRKRAELEGKIDTRLKALFQGQLNAAHKSGVKDFSDAVSNAVKAGQKKGASYDFAEIVKQETKAALERYEKEARASLVEGTSWSNYKQELKLYQKDLAEVSGQLRRDEMRRLATRVERWVRSRLSDSVSLEFNSLGSGRGGSGAPETGEKPSESKIWDRIWNLFVETVLDAERRFTDRATSFDASVDEVDVGLWRLRRKSWGVLRLKVEEEMMEGNLLLKLRENFEDKFRYDEAGVPRIWRPTDDIEGIYTRARESTLTLIPLLSKFHLAENNAPPPLDRWVGHTPSSATAADEEDLTPIGGVDEEDGKSLEEEVTILNDAKRQDLTVRFKKAADGVYVEAKRSAIGGITQVPLYFYGLLLALGWNEIWAVLRNPAYFFLLFVCAIGAYVTYQLNLWGPILKMADAASRQALEELKKKLREFLEASDTGRQAMAMSSGEEYEMSSLNRGGKRVEDEDENDDI.

Over 1–762 (MVDQRPRAGS…KRSAIGGITQ (762 aa)) the chain is Cytoplasmic. The GB1/RHD3-type G domain occupies 68 to 320 (GFNYHLISVF…IPADGFAHYA (253 aa)). 78–85 (GSQSTGKS) serves as a coordination point for GTP. The stretch at 462–519 (SYDFAEIVKQETKAALERYEKEARASLVEGTSWSNYKQELKLYQKDLAEVSGQLRRDE) forms a coiled coil. A disordered region spans residues 691–716 (RWVGHTPSSATAADEEDLTPIGGVDE). Acidic residues predominate over residues 703–716 (ADEEDLTPIGGVDE). Residues 763 to 783 (VPLYFYGLLLALGWNEIWAVL) traverse the membrane as a helical segment. The Lumenal portion of the chain corresponds to 784 to 786 (RNP). The helical transmembrane segment at 787–807 (AYFFLLFVCAIGAYVTYQLNL) threads the bilayer. Topologically, residues 808-873 (WGPILKMADA…VEDEDENDDI (66 aa)) are cytoplasmic. The stretch at 812–839 (LKMADAASRQALEELKKKLREFLEASDT) forms a coiled coil. A disordered region spans residues 839–873 (TGRQAMAMSSGEEYEMSSLNRGGKRVEDEDENDDI).

This sequence belongs to the TRAFAC class dynamin-like GTPase superfamily. GB1/RHD3 GTPase family. RHD3 subfamily.

It localises to the endoplasmic reticulum membrane. Its function is as follows. Cooperates with the reticulon proteins and tubule-shaping DP1 family proteins to generate and maintain the structure of the tubular endoplasmic reticulum network. Has GTPase activity, which is required for its function in ER organization. In Talaromyces marneffei (strain ATCC 18224 / CBS 334.59 / QM 7333) (Penicillium marneffei), this protein is Protein sey1 (sey1).